Consider the following 92-residue polypeptide: Small ribosomal subunit protein uS19 (92 aa).

This sequence belongs to the universal ribosomal protein uS19 family.

Protein S19 forms a complex with S13 that binds strongly to the 16S ribosomal RNA. The polypeptide is Small ribosomal subunit protein uS19 (Cyanothece sp. (strain PCC 7425 / ATCC 29141)).